The primary structure comprises 105 residues: Small ribosomal subunit protein uS10 (105 aa).

It belongs to the universal ribosomal protein uS10 family. As to quaternary structure, part of the 30S ribosomal subunit.

Involved in the binding of tRNA to the ribosomes. In Rickettsia massiliae (strain Mtu5), this protein is Small ribosomal subunit protein uS10.